The sequence spans 359 residues: MSKEKALESALSQIEKQFGKGAIMRLGDQEAAHDIDVIPSGIIALDVALGIGGYPKGRIIEIYGHESSGKTTLTLLAIAQCQKQGGTAAFVDAEHALDPKYAKLLGVDVDNLIVSQPDTGEQALEIADMLVRSGGVDIVVIDSVAALTPKAEIEGDMGDSHMGLQARLMSQALRKLTANIKRSNTLVIFINQIRMKIGVMFGNPETTTGGNALKFYSSVRLEVKKGGSIKDGIDVSGNEIKVKVVKNKVAPPFKQADFELIYGEGISLEAELIDLGAKYNIIEKSGAWYSYKGKKIGQGKEKSKEYLKENTAERDEIERAILELLLPNKYSNKDSNDSPKEGSKIKTKVNPAVTQDELI.

Position 64–71 (G64–T71) interacts with ATP. Residues K329 to I359 form a disordered region. Over residues S331–K344 the composition is skewed to basic and acidic residues.

This sequence belongs to the RecA family.

It localises to the cytoplasm. Functionally, can catalyze the hydrolysis of ATP in the presence of single-stranded DNA, the ATP-dependent uptake of single-stranded DNA by duplex DNA, and the ATP-dependent hybridization of homologous single-stranded DNAs. It interacts with LexA causing its activation and leading to its autocatalytic cleavage. The protein is Protein RecA of Francisella tularensis subsp. tularensis (strain FSC 198).